The primary structure comprises 426 residues: Serine--tRNA ligase (426 aa).

A compositionally biased stretch (basic and acidic residues) spans 1–15; that stretch reads MIDVKDLSENPDKFR. A disordered region spans residues 1 to 20; sequence MIDVKDLSENPDKFRASQRA. 228–230 is an L-serine binding site; sequence TSE. Residues 259-261 and valine 275 each bind ATP; that span reads RRE. L-serine is bound at residue glutamate 282. Residue 346 to 349 participates in ATP binding; the sequence is ELTS. Position 386 (threonine 386) interacts with L-serine.

Belongs to the class-II aminoacyl-tRNA synthetase family. Type-1 seryl-tRNA synthetase subfamily. In terms of assembly, homodimer. The tRNA molecule binds across the dimer.

It is found in the cytoplasm. It carries out the reaction tRNA(Ser) + L-serine + ATP = L-seryl-tRNA(Ser) + AMP + diphosphate + H(+). The catalysed reaction is tRNA(Sec) + L-serine + ATP = L-seryl-tRNA(Sec) + AMP + diphosphate + H(+). The protein operates within aminoacyl-tRNA biosynthesis; selenocysteinyl-tRNA(Sec) biosynthesis; L-seryl-tRNA(Sec) from L-serine and tRNA(Sec): step 1/1. In terms of biological role, catalyzes the attachment of serine to tRNA(Ser). Is also able to aminoacylate tRNA(Sec) with serine, to form the misacylated tRNA L-seryl-tRNA(Sec), which will be further converted into selenocysteinyl-tRNA(Sec). The sequence is that of Serine--tRNA ligase from Paenarthrobacter aurescens (strain TC1).